The sequence spans 207 residues: Large ribosomal subunit protein uL4 (207 aa).

The protein belongs to the universal ribosomal protein uL4 family. As to quaternary structure, part of the 50S ribosomal subunit.

Its function is as follows. One of the primary rRNA binding proteins, this protein initially binds near the 5'-end of the 23S rRNA. It is important during the early stages of 50S assembly. It makes multiple contacts with different domains of the 23S rRNA in the assembled 50S subunit and ribosome. Functionally, forms part of the polypeptide exit tunnel. The protein is Large ribosomal subunit protein uL4 of Rickettsia peacockii (strain Rustic).